Here is an 88-residue protein sequence, read N- to C-terminus: UPF0213 protein SAG0778 (88 aa).

The GIY-YIG domain maps to 4–80 (VPAYMYVLEC…QKTRQAKLTY (77 aa)).

Belongs to the UPF0213 family.

The sequence is that of UPF0213 protein SAG0778 from Streptococcus agalactiae serotype V (strain ATCC BAA-611 / 2603 V/R).